The sequence spans 654 residues: DNA ligase (654 aa).

NAD(+)-binding positions include 37–41, 86–87, and glutamate 113; these read DEEYD and SM. Lysine 115 serves as the catalytic N6-AMP-lysine intermediate. Residues arginine 136, glutamate 170, and lysine 308 each coordinate NAD(+). Cysteine 402, cysteine 405, cysteine 418, and cysteine 423 together coordinate Zn(2+). The BRCT domain occupies 576 to 654; the sequence is ITQNAFSGKS…GEFERLKLEI (79 aa).

It belongs to the NAD-dependent DNA ligase family. LigA subfamily. Mg(2+) is required as a cofactor. Requires Mn(2+) as cofactor.

It carries out the reaction NAD(+) + (deoxyribonucleotide)n-3'-hydroxyl + 5'-phospho-(deoxyribonucleotide)m = (deoxyribonucleotide)n+m + AMP + beta-nicotinamide D-nucleotide.. Functionally, DNA ligase that catalyzes the formation of phosphodiester linkages between 5'-phosphoryl and 3'-hydroxyl groups in double-stranded DNA using NAD as a coenzyme and as the energy source for the reaction. It is essential for DNA replication and repair of damaged DNA. This Campylobacter curvus (strain 525.92) protein is DNA ligase.